The following is a 473-amino-acid chain: Adenosylhomocysteinase (473 aa).

Substrate is bound by residues Thr-64, Asp-139, and Glu-199. Residue 200-202 (TTT) participates in NAD(+) binding. Lys-229 and Asp-233 together coordinate substrate. Residues Asn-234, 263 to 268 (GYGDVG), Glu-286, Asn-321, 342 to 344 (IGH), and Asn-387 contribute to the NAD(+) site.

It belongs to the adenosylhomocysteinase family. Requires NAD(+) as cofactor.

Its subcellular location is the cytoplasm. It catalyses the reaction S-adenosyl-L-homocysteine + H2O = L-homocysteine + adenosine. Its pathway is amino-acid biosynthesis; L-homocysteine biosynthesis; L-homocysteine from S-adenosyl-L-homocysteine: step 1/1. Its function is as follows. May play a key role in the regulation of the intracellular concentration of adenosylhomocysteine. This chain is Adenosylhomocysteinase, found in Paraburkholderia xenovorans (strain LB400).